A 291-amino-acid chain; its full sequence is Probable cell wall amidase LytH (291 aa).

The N-terminal stretch at 1–40 (MKKIDSWLTKHGLKNRLTLVVIVIFIIFLILLFMFVNLSD) is a signal peptide. The region spanning 41 to 105 (EDTGQITITE…WVAGWHTNLN (65 aa)) is the SH3b domain. The MurNAc-LAA domain occupies 122–286 (IVLDPGHGGS…VEQAIVDGLK (165 aa)). The disordered stretch occupies residues 123–147 (VLDPGHGGSDQGASSSTPSKSLEKN). Positions 133–142 (QGASSSTPSK) are enriched in polar residues.

The protein belongs to the N-acetylmuramoyl-L-alanine amidase 3 family.

The protein resides in the secreted. Its function is as follows. Probably involved in cell-wall metabolism. In Staphylococcus epidermidis (strain ATCC 12228 / FDA PCI 1200), this protein is Probable cell wall amidase LytH (lytH).